Consider the following 85-residue polypeptide: U4-theraphotoxin-Hhn1c (85 aa).

The first 22 residues, 1–22 (MKVTLIAIVTCAAVLVLHTTAA), serve as a signal peptide directing secretion. A propeptide spanning residues 23 to 48 (EELEAESQLMEVGMPDTELAAVDEER) is cleaved from the precursor. Disulfide bonds link cysteine 52–cysteine 66, cysteine 56–cysteine 77, and cysteine 71–cysteine 82.

It belongs to the neurotoxin 12 (Hwtx-2) family. 02 (Hwtx-2) subfamily. As to expression, expressed by the venom gland.

It localises to the secreted. Functionally, postsynaptic neurotoxin. The protein is U4-theraphotoxin-Hhn1c of Cyriopagopus hainanus (Chinese bird spider).